A 124-amino-acid polypeptide reads, in one-letter code: Protein ApaG (124 aa).

The ApaG domain maps to 1 to 124 (MSRYELTVQV…FALAMPRMLH (124 aa)).

This Ralstonia nicotianae (strain ATCC BAA-1114 / GMI1000) (Ralstonia solanacearum) protein is Protein ApaG.